A 413-amino-acid chain; its full sequence is Calmodulin-binding protein CmbB (413 aa).

FNIP repeat units lie at residues 104–148 (FNHP…LSDC), 149–192 (YNQA…LGKG), 222–257 (SLPP…FGDG), 258–301 (FNQP…FHQF), 304–343 (FSQT…FSEK), and 344–386 (YNHP…LNGY).

Interacts with calmodulin in the presence of Ca(2+).

The chain is Calmodulin-binding protein CmbB from Dictyostelium discoideum (Social amoeba).